We begin with the raw amino-acid sequence, 1531 residues long: MALTPQRGSSSGLSRPELWLLLWAAAWRLGATACPALCTCTGTTVDCHGTGLQAIPKNIPRNTERLELNGNNITRIHKNDFAGLKQLRVLQLMENQIGAVERGAFDDMKELERLRLNRNQLQVLPELLFQNNQALSRLDLSENSLQAVPRKAFRGATDLKNLQLDKNQISCIEEGAFRALRGLEVLTLNNNNITTIPVSSFNHMPKLRTFRLHSNHLFCDCHLAWLSQWLRQRPTIGLFTQCSGPASLRGLNVAEVQKSEFSCSGQGEAAQVPACTLSSGSCPAMCSCSNGIVDCRGKGLTAIPANLPETMTEIRLELNGIKSIPPGAFSPYRKLRRIDLSNNQIAEIAPDAFQGLRSLNSLVLYGNKITDLPRGVFGGLYTLQLLLLNANKINCIRPDAFQDLQNLSLLSLYDNKIQSLAKGTFTSLRAIQTLHLAQNPFICDCNLKWLADFLRTNPIETTGARCASPRRLANKRIGQIKSKKFRCSAKEQYFIPGTEDYHLNSECTSDVACPHKCRCEASVVECSGLKLSKIPERIPQSTTELRLNNNEISILEATGLFKKLSHLKKINLSNNKVSEIEDGTFEGATSVSELHLTANQLESVRSGMFRGLDGLRTLMLRNNRISCIHNDSFTGLRNVRLLSLYDNHITTISPGAFDTLQALSTLNLLANPFNCNCQLAWLGDWLRKRKIVTGNPRCQNPDFLRQIPLQDVAFPDFRCEEGQEEVGCLPRPQCPQECACLDTVVRCSNKHLQALPKGIPKNVTELYLDGNQFTLVPGQLSTFKYLQLVDLSNNKISSLSNSSFTNMSQLTTLILSYNALQCIPPLAFQGLRSLRLLSLHGNDVSTLQEGIFADVTSLSHLAIGANPLYCDCHLRWLSSWVKTGYKEPGIARCAGPPEMEGKLLLTTPAKKFECQGPPSLAVQAKCDPCLSSPCQNQGTCHNDPLEVYRCTCPSGYKGRNCEVSLDSCSSNPCGNGGTCHAQEGEDAGFTCSCPSGFEGLTCGMNTDDCVKHDCVNGGVCVDGIGNYTCQCPLQYTGRACEQLVDFCSPDLNPCQHEAQCVGTPEGPRCECVPGYTGDNCSKNQDDCKDHQCQNGAQCVDEINSYACLCAEGYSGQLCEIPPAPRNSCEGTECQNGANCVDQGSRPVCQCLPGFGGPECEKLLSVNFVDRDTYLQFTDLQNWPRANITLQVSTAEDNGILLYNGDNDHIAVELYQGHVRVSYDPGSYPSSAIYSAETINDGQFHTVELVTFDQMVNLSIDGGSPMTMDNFGKHYTLNSEAPLYVGGMPVDVNSAAFRLWQILNGTSFHGCIRNLYINNELQDFTKTQMKPGVVPGCEPCRKLYCLHGICQPNATPGPVCHCEAGWGGLHCDQPVDGPCHGHKCVHGKCVPLDALAYSCQCQDGYSGALCNQVGAVAEPCGGLQCLHGHCQASATRGAHCVCSPGFSGELCEQESECRGDPVRDFHRVQRGYAICQTTRPLSWVECRGACPGQGCCQGLRLKRRKLTFECSDGTSFAEEVEKPTKCGCAPCA.

An N-terminal signal peptide occupies residues methionine 1–alanine 33. The LRRNT domain occupies cysteine 34–arginine 61. LRR repeat units follow at residues asparagine 62–glycine 83, glutamine 86–aspartate 107, glutamate 110–asparagine 131, alanine 134–glycine 155, aspartate 158–alanine 179, and glycine 182–histidine 203. Residue asparagine 72 is glycosylated (N-linked (GlcNAc...) asparagine). Asparagine 192 carries an N-linked (GlcNAc...) asparagine glycan. The region spanning asparagine 215 to glycine 265 is the LRRCT 1 domain. An LRRNT 2 domain is found at proline 273–glutamate 309. Cysteines 286 and 295 form a disulfide. 5 LRR repeats span residues threonine 310–proline 331, lysine 334–glycine 355, serine 358–glycine 379, threonine 382–aspartate 403, and asparagine 406–serine 427. Asparagine 406 is a glycosylation site (N-linked (GlcNAc...) asparagine). An LRRCT 2 domain is found at asparagine 439 to alanine 489. 4 disulfides stabilise this stretch: cysteine 443–cysteine 466, cysteine 445–cysteine 487, cysteine 513–cysteine 519, and cysteine 517–cysteine 526. One can recognise an LRRNT 3 domain in the interval asparagine 504–glutamine 540. 5 LRR repeats span residues serine 541–lysine 562, histidine 566–glycine 587, serine 590–glycine 611, glycine 614–glycine 635, and asparagine 638–threonine 659. Asparagine 571 carries N-linked (GlcNAc...) asparagine glycosylation. An N-linked (GlcNAc...) asparagine glycan is attached at asparagine 630. The LRRCT 3 domain maps to asparagine 671–glutamate 721. 2 cysteine pairs are disulfide-bonded: cysteine 675/cysteine 698 and cysteine 677/cysteine 719. Residues glutamate 725 to lysine 761 enclose the LRRNT 4 domain. Asparagine 762, asparagine 801, and asparagine 806 each carry an N-linked (GlcNAc...) asparagine glycan. 4 LRR repeats span residues asparagine 762–phenylalanine 783, tyrosine 785–asparagine 806, glutamine 809–glycine 830, and serine 833–aspartate 854. The LRRCT 4 domain occupies asparagine 866 to glycine 916. EGF-like domains lie at aspartate 927 to glutamate 962, serine 964 to glycine 1003, asparagine 1005 to glutamate 1041, leucine 1043 to serine 1081, asparagine 1083 to glutamate 1119, and proline 1124 to glutamate 1160. Intrachain disulfides connect cysteine 929–cysteine 940, cysteine 934–cysteine 950, cysteine 952–cysteine 961, cysteine 968–cysteine 979, cysteine 973–cysteine 991, cysteine 993–cysteine 1002, cysteine 1009–cysteine 1020, cysteine 1014–cysteine 1029, cysteine 1031–cysteine 1040, cysteine 1047–cysteine 1060, cysteine 1054–cysteine 1069, cysteine 1071–cysteine 1080, cysteine 1087–cysteine 1098, cysteine 1092–cysteine 1107, cysteine 1109–cysteine 1118, cysteine 1128–cysteine 1139, cysteine 1133–cysteine 1148, and cysteine 1150–cysteine 1159. N-linked (GlcNAc...) asparagine glycosylation occurs at asparagine 1026. A glycan (N-linked (GlcNAc...) asparagine) is linked at asparagine 1079. The region spanning leucine 1163 to cysteine 1336 is the Laminin G-like domain. N-linked (GlcNAc...) asparagine glycosylation is found at asparagine 1186, asparagine 1256, and asparagine 1303. Intrachain disulfides connect cysteine 1310-cysteine 1336, cysteine 1339-cysteine 1349, cysteine 1344-cysteine 1359, cysteine 1361-cysteine 1370, cysteine 1378-cysteine 1388, cysteine 1383-cysteine 1398, cysteine 1400-cysteine 1409, cysteine 1419-cysteine 1429, cysteine 1424-cysteine 1439, cysteine 1441-cysteine 1450, cysteine 1456-cysteine 1495, cysteine 1474-cysteine 1509, cysteine 1485-cysteine 1525, and cysteine 1489-cysteine 1527. EGF-like domains follow at residues glutamate 1337–aspartate 1371, valine 1374–asparagine 1410, and valine 1415–glutamate 1451. The region spanning cysteine 1456–alanine 1531 is the CTCK domain.

As to quaternary structure, interacts with ROBO1 and GREM1. In terms of tissue distribution, in adult brains expressed in the hippocampus, cerebral cortex, and olfactory bulb but not in the cerebellum. In embryo expressed in cerebral cortex.

It is found in the secreted. Functionally, thought to act as molecular guidance cue in cellular migration, and function appears to be mediated by interaction with roundabout homolog receptors. During neural development involved in axonal navigation at the ventral midline of the neural tube and projection of axons to different regions. SLIT1 and SLIT2 together seem to be essential for midline guidance in the forebrain by acting as repulsive signal preventing inappropriate midline crossing by axons projecting from the olfactory bulb. This chain is Slit homolog 1 protein (Slit1), found in Rattus norvegicus (Rat).